Consider the following 601-residue polypeptide: Amino-acid acetyltransferase, mitochondrial (601 aa).

The N-acetyltransferase domain maps to 401-558; it reads FTMDNLIASK…KKKQNNKKKK (158 aa).

The protein belongs to the acetyltransferase family.

It is found in the mitochondrion. The enzyme catalyses L-glutamate + acetyl-CoA = N-acetyl-L-glutamate + CoA + H(+). Its pathway is amino-acid biosynthesis; L-arginine biosynthesis; N(2)-acetyl-L-ornithine from L-glutamate: step 1/4. N-acetylglutamate synthase involved in arginine biosynthesis. In Lodderomyces elongisporus (strain ATCC 11503 / CBS 2605 / JCM 1781 / NBRC 1676 / NRRL YB-4239) (Yeast), this protein is Amino-acid acetyltransferase, mitochondrial (ARG2).